The sequence spans 329 residues: tRNA uridine(34) hydroxylase (329 aa).

The Rhodanese domain maps to 123 to 217 (SDPETVLIDT…YLEEVPKEKS (95 aa)). Cys-177 functions as the Cysteine persulfide intermediate in the catalytic mechanism. The segment at 310–329 (LNKQKKQQAKEAARKKTEKN) is disordered. The span at 317–329 (QAKEAARKKTEKN) shows a compositional bias: basic and acidic residues.

Belongs to the TrhO family.

It carries out the reaction uridine(34) in tRNA + AH2 + O2 = 5-hydroxyuridine(34) in tRNA + A + H2O. In terms of biological role, catalyzes oxygen-dependent 5-hydroxyuridine (ho5U) modification at position 34 in tRNAs. In Francisella tularensis subsp. novicida (strain U112), this protein is tRNA uridine(34) hydroxylase.